The following is a 930-amino-acid chain: uncharacterized protein (930 aa).

Positions 1–20 are cleaved as a signal peptide; sequence MPSFVLWTFHLCSQWFQGLT. Asn-137, Asn-146, Asn-164, Asn-210, Asn-257, Asn-628, Asn-717, and Asn-799 each carry an N-linked (GlcNAc...) asparagine glycan.

Its subcellular location is the secreted. This is an uncharacterized protein from Arthroderma benhamiae (strain ATCC MYA-4681 / CBS 112371) (Trichophyton mentagrophytes).